Reading from the N-terminus, the 184-residue chain is Large ribosomal subunit protein uL6 (184 aa).

The protein belongs to the universal ribosomal protein uL6 family. Part of the 50S ribosomal subunit.

This protein binds to the 23S rRNA, and is important in its secondary structure. It is located near the subunit interface in the base of the L7/L12 stalk, and near the tRNA binding site of the peptidyltransferase center. This is Large ribosomal subunit protein uL6 from Amoebophilus asiaticus (strain 5a2).